Here is a 579-residue protein sequence, read N- to C-terminus: uncharacterized protein (579 aa).

Transmembrane regions (helical) follow at residues 20-40, 54-74, 86-106, 142-162, 174-194, 204-224, 234-254, 279-299, 310-330, 335-355, 366-386, and 467-487; these read ALWAMMVGFFMIMLDSTVVAI, ATVVWVTSAYLLAYAVPMLVA, LYLIGLGVFTVASLGCGLSSG, GVALGAWGTVASVASLVGPLA, WIFFVNVPVGVIGLILAAYLI, FDWFGVGLSGAGMFLIVFGLQ, WIWAVIVGGIGFMSLFVYWQA, IAIIAFAGTGMMLPVTFYAQA, VLFAPTAIVGGVLAPFVGMII, PLCVLGFGFSVLAIAMTWLLC, LVLPFIALGVAGAFVWSPLTV, and MLLPAFVALFGIVAALFLVDF. The disordered stretch occupies residues 516 to 579; that stretch reads REPEEDCDTQ…DTESTAPSAL (64 aa). The segment covering 526 to 540 has biased composition (low complexity); that stretch reads PLRASRPAAAAASRS. The span at 570 to 579 shows a compositional bias: polar residues; it reads DTESTAPSAL.

Belongs to the major facilitator superfamily. EmrB family.

It localises to the cell membrane. This is an uncharacterized protein from Mycobacterium tuberculosis (strain ATCC 25618 / H37Rv).